Consider the following 410-residue polypeptide: Peptidase T (410 aa).

His-79 lines the Zn(2+) pocket. Asp-81 is a catalytic residue. Residue Asp-142 coordinates Zn(2+). The Proton acceptor role is filled by Glu-176. Positions 177, 199, and 381 each coordinate Zn(2+).

This sequence belongs to the peptidase M20B family. The cofactor is Zn(2+).

The protein localises to the cytoplasm. The enzyme catalyses Release of the N-terminal residue from a tripeptide.. Cleaves the N-terminal amino acid of tripeptides. The protein is Peptidase T of Bacillus anthracis (strain A0248).